The sequence spans 303 residues: Probable 5-dehydro-4-deoxyglucarate dehydratase (303 aa).

The protein belongs to the DapA family.

It carries out the reaction 5-dehydro-4-deoxy-D-glucarate + H(+) = 2,5-dioxopentanoate + CO2 + H2O. It functions in the pathway carbohydrate acid metabolism; D-glucarate degradation; 2,5-dioxopentanoate from D-glucarate: step 2/2. This is Probable 5-dehydro-4-deoxyglucarate dehydratase from Acinetobacter baumannii (strain AB307-0294).